Here is a 100-residue protein sequence, read N- to C-terminus: UPF0298 protein lp_2135 (100 aa).

It belongs to the UPF0298 family.

The protein resides in the cytoplasm. This chain is UPF0298 protein lp_2135, found in Lactiplantibacillus plantarum (strain ATCC BAA-793 / NCIMB 8826 / WCFS1) (Lactobacillus plantarum).